A 214-amino-acid chain; its full sequence is Probable transaldolase (214 aa).

Lys83 (schiff-base intermediate with substrate) is an active-site residue.

The protein belongs to the transaldolase family. Type 3B subfamily.

The protein localises to the cytoplasm. The enzyme catalyses D-sedoheptulose 7-phosphate + D-glyceraldehyde 3-phosphate = D-erythrose 4-phosphate + beta-D-fructose 6-phosphate. Its pathway is carbohydrate degradation; pentose phosphate pathway; D-glyceraldehyde 3-phosphate and beta-D-fructose 6-phosphate from D-ribose 5-phosphate and D-xylulose 5-phosphate (non-oxidative stage): step 2/3. Transaldolase is important for the balance of metabolites in the pentose-phosphate pathway. This Geobacter sp. (strain M21) protein is Probable transaldolase.